Consider the following 252-residue polypeptide: Neurotrophic factor BDNF precursor form (252 aa).

The signal sequence occupies residues 1–18; it reads MTILFLTMVISYFGCMKA. Positions 19–133 are excised as a propeptide; the sequence is APMKEANVRG…AANMSMRVRR (115 aa). Positions 43 to 62 are disordered; the sequence is LESVNGPKAGSRGLTSSSSS. Asn-126 carries N-linked (GlcNAc...) asparagine glycosylation. 3 disulfides stabilise this stretch: Cys-146-Cys-213, Cys-191-Cys-242, and Cys-201-Cys-244.

It belongs to the NGF-beta family. Monomers and homodimers. Binds to NTRK2/TRKB. Can form heterodimers with other neurotrophin family members, such as NTF3 and NTF4 (in vitro), but the physiological relevance of this is not clear. BDNF precursor form: interacts with the heterodimer formed by NGFR and SORCS2. Mature BDNF has much lower affinity for the heterodimer formed by NGFR and SORCS2. In terms of processing, N-glycosylated and glycosulfated, contrary to mature BDNF. Post-translationally, mature BDNF is produced by proteolytic removal of the propeptide, catalyzed by a FURIN family member. In addition, the precursor form is proteolytically cleaved within the propeptide, but this is not an obligatory intermediate for the production of mature BDNF. Can be converted into mature BDNF by plasmin (PLG). In terms of tissue distribution, brain and central nervous system.

The protein localises to the secreted. Functionally, important signaling molecule that activates signaling cascades downstream of NTRK2. During development, promotes the survival and differentiation of selected neuronal populations of the peripheral and central nervous systems. Participates in axonal growth, pathfinding and in the modulation of dendritic growth and morphology. Major regulator of synaptic transmission and plasticity at adult synapses in many regions of the CNS. The versatility of BDNF is emphasized by its contribution to a range of adaptive neuronal responses including long-term potentiation (LTP), long-term depression (LTD), certain forms of short-term synaptic plasticity, as well as homeostatic regulation of intrinsic neuronal excitability. Important signaling molecule that activates signaling cascades downstream of NTRK2. Activates signaling cascades via the heterodimeric receptor formed by NGFR and SORCS2. Signaling via NGFR and SORCS2 plays a role in synaptic plasticity and long-term depression (LTD). Binding to NGFR and SORCS2 promotes neuronal apoptosis. Promotes neuronal growth cone collapse. The chain is Neurotrophic factor BDNF precursor form (BDNF) from Sus scrofa (Pig).